A 390-amino-acid polypeptide reads, in one-letter code: Mannitol-1-phosphate 5-dehydrogenase (390 aa).

NAD(+) is bound at residue 7–18 (AVHFGGGNIGRG). K216 is a catalytic residue.

The protein belongs to the mannitol dehydrogenase family. As to quaternary structure, monomer.

It catalyses the reaction D-mannitol 1-phosphate + NAD(+) = beta-D-fructose 6-phosphate + NADH + H(+). In terms of biological role, catalyzes the NAD(H)-dependent interconversion of D-fructose 6-phosphate and D-mannitol 1-phosphate in the mannitol metabolic pathway. Required for the process of sporulation on senescing leaf material. The sequence is that of Mannitol-1-phosphate 5-dehydrogenase (mpd1) from Phaeosphaeria nodorum (strain SN15 / ATCC MYA-4574 / FGSC 10173) (Glume blotch fungus).